Consider the following 448-residue polypeptide: Adenylosuccinate synthetase (448 aa).

GTP is bound by residues 22–28 and 50–52; these read GDEGKGK and GHT. The Proton acceptor role is filled by Asp23. Positions 23 and 50 each coordinate Mg(2+). IMP contacts are provided by residues 23-26, 48-51, Thr139, Arg153, Gln234, Thr249, and Arg321; these read DEGK and NAGH. The Proton donor role is filled by His51. 317–323 lines the substrate pocket; that stretch reads SVTGRPR. Residues Arg323, 349–351, and 431–433 contribute to the GTP site; these read KLD and STG.

This sequence belongs to the adenylosuccinate synthetase family. In terms of assembly, homodimer. Mg(2+) serves as cofactor.

It localises to the cytoplasm. It catalyses the reaction IMP + L-aspartate + GTP = N(6)-(1,2-dicarboxyethyl)-AMP + GDP + phosphate + 2 H(+). Its pathway is purine metabolism; AMP biosynthesis via de novo pathway; AMP from IMP: step 1/2. Plays an important role in the de novo pathway of purine nucleotide biosynthesis. Catalyzes the first committed step in the biosynthesis of AMP from IMP. This chain is Adenylosuccinate synthetase, found in Burkholderia mallei (strain NCTC 10247).